We begin with the raw amino-acid sequence, 66 residues long: U-scoloptoxin(24)-Er2a (66 aa).

An N-terminal signal peptide occupies residues 1 to 23 (MVKPLHCLIGIVLFLAVLNAGNG). A disordered region spans residues 43–66 (SLFHGNQRKKRSEEKRFSDMEQTK). The segment covering 53–66 (RSEEKRFSDMEQTK) has biased composition (basic and acidic residues).

Belongs to the scoloptoxin-24 family. In terms of tissue distribution, expressed by the venom gland.

Its subcellular location is the secreted. The chain is U-scoloptoxin(24)-Er2a from Ethmostigmus rubripes (Giant centipede).